Here is a 125-residue protein sequence, read N- to C-terminus: Small ribosomal subunit protein bS6 (125 aa).

A disordered region spans residues 101-125 (PMMKEEKAKNLLAPQSDAAEPTAAA).

This sequence belongs to the bacterial ribosomal protein bS6 family.

Functionally, binds together with bS18 to 16S ribosomal RNA. In Laribacter hongkongensis (strain HLHK9), this protein is Small ribosomal subunit protein bS6.